We begin with the raw amino-acid sequence, 284 residues long: Short chain dehydrogenase/reductase AacuD (284 aa).

Val-37 provides a ligand contact to NADP(+). Catalysis depends on proton donor residues Ser-166 and Tyr-180. Residues Tyr-180, Lys-184, and Thr-215 each coordinate NADP(+). The Lowers pKa of active site Tyr role is filled by Lys-184.

Belongs to the short-chain dehydrogenases/reductases (SDR) family.

It functions in the pathway secondary metabolite biosynthesis. In terms of biological role, short chain dehydrogenase/reductase; part of the gene cluster that mediates the biosynthesis of the tetrahydroxanthone dimer secalonic acid D. The pathway begins with the synthesis of atrochrysone thioester by the polyketide synthase AacuL. The atrochrysone carboxyl ACP thioesterase AacuM then breaks the thioester bond and releases the atrochrysone carboxylic acid from AacuL. Atrochrysone carboxylic acid is decarboxylated by the decarboxylase AacuI, and oxidized by the anthrone oxygenase AacuG to yield emodin. Emodin is then reduced to emodin hydroquinone by a yet unidentified oxidoreductase. A-ring reduction by the short chain dehydrogenase AacuN, dehydration by the scytalone dehydratase-like protein AacuK and probable spontaneous re-oxidation, results in overall deoxygenation to chrysophanol. Baeyer-Villiger oxidation by the Baeyer-Villiger monooxygenase (BVMO) AacuH then yields monodictyphenone. Monodictyphenone is transformed into compounds with the tetrahydroxanthone skeleton via methylesterification by the methyltransferase AacuQ, followed by the action of the flavin-dependent monooxygenase AacuC, the isomerase AacuP, and the short chain dehydrogenase/reductase AacuF or AacuD. AacuF and AacuD should accept the same compound as a substrate but perform the ketoreduction with a different stereoselectivity, thus yielding blennolides B and A, respectively. In the final step of the biosynthesis, the cytochrome P450 monooxygenase AacuE accepts blennolide B and/or blennolide A to conduct the dimerization reaction to furnish the tetrahydroxanthone dimers, secalonic acids D, B, and F. This chain is Short chain dehydrogenase/reductase AacuD, found in Aspergillus aculeatus (strain ATCC 16872 / CBS 172.66 / WB 5094).